We begin with the raw amino-acid sequence, 272 residues long: Imidazole glycerol phosphate synthase subunit HisF (272 aa).

Catalysis depends on residues Asp11 and Asp130.

It belongs to the HisA/HisF family. Heterodimer of HisH and HisF.

The protein resides in the cytoplasm. The enzyme catalyses 5-[(5-phospho-1-deoxy-D-ribulos-1-ylimino)methylamino]-1-(5-phospho-beta-D-ribosyl)imidazole-4-carboxamide + L-glutamine = D-erythro-1-(imidazol-4-yl)glycerol 3-phosphate + 5-amino-1-(5-phospho-beta-D-ribosyl)imidazole-4-carboxamide + L-glutamate + H(+). The protein operates within amino-acid biosynthesis; L-histidine biosynthesis; L-histidine from 5-phospho-alpha-D-ribose 1-diphosphate: step 5/9. Its function is as follows. IGPS catalyzes the conversion of PRFAR and glutamine to IGP, AICAR and glutamate. The HisF subunit catalyzes the cyclization activity that produces IGP and AICAR from PRFAR using the ammonia provided by the HisH subunit. This chain is Imidazole glycerol phosphate synthase subunit HisF, found in Methanococcus maripaludis (strain C6 / ATCC BAA-1332).